The following is a 181-amino-acid chain: Large ribosomal subunit protein uL5 (181 aa).

The protein belongs to the universal ribosomal protein uL5 family. As to quaternary structure, part of the 50S ribosomal subunit; part of the 5S rRNA/L5/L18/L25 subcomplex. Contacts the 5S rRNA and the P site tRNA. Forms a bridge to the 30S subunit in the 70S ribosome.

In terms of biological role, this is one of the proteins that bind and probably mediate the attachment of the 5S RNA into the large ribosomal subunit, where it forms part of the central protuberance. In the 70S ribosome it contacts protein S13 of the 30S subunit (bridge B1b), connecting the 2 subunits; this bridge is implicated in subunit movement. Contacts the P site tRNA; the 5S rRNA and some of its associated proteins might help stabilize positioning of ribosome-bound tRNAs. This chain is Large ribosomal subunit protein uL5, found in Helicobacter pylori (strain G27).